The following is a 501-amino-acid chain: Glycerol kinase (501 aa).

Residue Thr14 participates in ADP binding. Thr14, Thr15, and Ser16 together coordinate ATP. Thr14 contacts sn-glycerol 3-phosphate. Arg18 lines the ADP pocket. 4 residues coordinate sn-glycerol 3-phosphate: Arg84, Glu85, Tyr135, and Asp244. The glycerol site is built by Arg84, Glu85, Tyr135, Asp244, and Gln245. Positions 266 and 309 each coordinate ADP. Residues Thr266, Gly309, Gln313, and Gly410 each contribute to the ATP site. Positions 410 and 414 each coordinate ADP.

The protein belongs to the FGGY kinase family.

The catalysed reaction is glycerol + ATP = sn-glycerol 3-phosphate + ADP + H(+). It functions in the pathway polyol metabolism; glycerol degradation via glycerol kinase pathway; sn-glycerol 3-phosphate from glycerol: step 1/1. Inhibited by fructose 1,6-bisphosphate (FBP). Key enzyme in the regulation of glycerol uptake and metabolism. Catalyzes the phosphorylation of glycerol to yield sn-glycerol 3-phosphate. The sequence is that of Glycerol kinase from Deinococcus radiodurans (strain ATCC 13939 / DSM 20539 / JCM 16871 / CCUG 27074 / LMG 4051 / NBRC 15346 / NCIMB 9279 / VKM B-1422 / R1).